A 101-amino-acid polypeptide reads, in one-letter code: Gamma-secretase subunit PEN-2 (101 aa).

At 1 to 17 (MNLERVSNEEKLNLCRK) the chain is on the cytoplasmic side. The helical intramembrane region spans 18 to 36 (YYLGGFAFLPFLWLVNIFW). Topologically, residues 37–57 (FFREAFLVPAYTEQSQIKGYV) are cytoplasmic. Residues 58-78 (WRSAVGFLFWVIVLTSWITIF) traverse the membrane as a helical segment. The Lumenal portion of the chain corresponds to 79–101 (QIYRPRWGALGDYLSFTIPLGTP).

Belongs to the PEN-2 family. In terms of assembly, the functional gamma-secretase complex is composed of at least four polypeptides: a presenilin homodimer (PSEN1 or PSEN2), nicastrin (NCSTN), APH1 (APH1A or APH1B) and PSENEN. Widely expressed. Expressed in leukocytes, lung, placenta, small intestine, liver, kidney, spleen thymus, skeletal muscle, heart and brain.

The protein resides in the endoplasmic reticulum membrane. It is found in the golgi apparatus. It localises to the golgi stack membrane. Its subcellular location is the cell membrane. The protein localises to the membrane. Functionally, essential subunit of the gamma-secretase complex, an endoprotease complex that catalyzes the intramembrane cleavage of integral membrane proteins such as Notch receptors and APP (amyloid-beta precursor protein). The gamma-secretase complex plays a role in Notch and Wnt signaling cascades and regulation of downstream processes via its role in processing key regulatory proteins, and by regulating cytosolic CTNNB1 levels. PSENEN modulates both endoproteolysis of presenilin and gamma-secretase activity. This Homo sapiens (Human) protein is Gamma-secretase subunit PEN-2 (PSENEN).